A 374-amino-acid chain; its full sequence is Protein-glutamate methylesterase/protein-glutamine glutaminase 1 (374 aa).

Residues 4-121 (KVLVVDDSSF…ATNKDEAILL (118 aa)) form the Response regulatory domain. The residue at position 55 (aspartate 55) is a 4-aspartylphosphate. Residues 141–170 (PSVAPVTPRPTTGSAVGNATTPVQSASAPV) form a disordered region. Residues 149-167 (RPTTGSAVGNATTPVQSAS) are compositionally biased toward polar residues. A CheB-type methylesterase domain is found at 174–374 (PLSSIRASGK…ESILKESARG (201 aa)). Residues serine 193, histidine 220, and aspartate 316 contribute to the active site.

This sequence belongs to the CheB family. Post-translationally, phosphorylated by CheA. Phosphorylation of the N-terminal regulatory domain activates the methylesterase activity.

The protein localises to the cytoplasm. It catalyses the reaction [protein]-L-glutamate 5-O-methyl ester + H2O = L-glutamyl-[protein] + methanol + H(+). It carries out the reaction L-glutaminyl-[protein] + H2O = L-glutamyl-[protein] + NH4(+). Its function is as follows. Involved in chemotaxis. Part of a chemotaxis signal transduction system that modulates chemotaxis in response to various stimuli. Catalyzes the demethylation of specific methylglutamate residues introduced into the chemoreceptors (methyl-accepting chemotaxis proteins or MCP) by CheR. Also mediates the irreversible deamidation of specific glutamine residues to glutamic acid. This is Protein-glutamate methylesterase/protein-glutamine glutaminase 1 from Shewanella oneidensis (strain ATCC 700550 / JCM 31522 / CIP 106686 / LMG 19005 / NCIMB 14063 / MR-1).